The primary structure comprises 347 residues: Quinolinate synthase (347 aa).

The iminosuccinate site is built by H47 and S68. Residue C113 participates in [4Fe-4S] cluster binding. Residues 139-141 (YAN) and S156 each bind iminosuccinate. C200 contacts [4Fe-4S] cluster. Iminosuccinate contacts are provided by residues 226–228 (HPE) and T243. C297 serves as a coordination point for [4Fe-4S] cluster.

Belongs to the quinolinate synthase family. Type 1 subfamily. [4Fe-4S] cluster serves as cofactor.

It localises to the cytoplasm. It carries out the reaction iminosuccinate + dihydroxyacetone phosphate = quinolinate + phosphate + 2 H2O + H(+). It participates in cofactor biosynthesis; NAD(+) biosynthesis; quinolinate from iminoaspartate: step 1/1. In terms of biological role, catalyzes the condensation of iminoaspartate with dihydroxyacetone phosphate to form quinolinate. This Escherichia fergusonii (strain ATCC 35469 / DSM 13698 / CCUG 18766 / IAM 14443 / JCM 21226 / LMG 7866 / NBRC 102419 / NCTC 12128 / CDC 0568-73) protein is Quinolinate synthase.